Here is a 62-residue protein sequence, read N- to C-terminus: Short neurotoxin 2 (62 aa).

Positions 1-20 (MTCYNQQSSEAKTTTTCSGG) are disordered. Disulfide bonds link Cys-3/Cys-24, Cys-17/Cys-41, Cys-43/Cys-54, and Cys-55/Cys-60.

This sequence belongs to the three-finger toxin family. Short-chain subfamily. Type I alpha-neurotoxin sub-subfamily. As to expression, expressed by the venom gland.

The protein resides in the secreted. In terms of biological role, binds to muscle nicotinic acetylcholine receptor (nAChR) and inhibit acetylcholine from binding to the receptor, thereby impairing neuromuscular transmission. The chain is Short neurotoxin 2 from Oxyuranus scutellatus scutellatus (Australian taipan).